The primary structure comprises 402 residues: MKLMTMPSEFQKALPILTKIKEAGYEAYFVGGSVRDVLLGRPIHDVDIATSSYPEETKAIFNRTVDVGIEHGTVLVLENGGEYEITTFRTEDVYVDYRRPSQVSFVRSLEEDLKRRDFTVNALALDENGQVIDKFRGLIDLKQKRLRAVGKAEERFEEDALRIMRGFRFAASLDFDIEATTFEAMRSHSPLLEKISVERSFTEFDKLLMAPHWRKGISAMIACQAYDYLPGLKQQEAGLNHLIVSLKDNFTFSDHHQAWAYVMISLAIEDPKSFLKAWKTSNDFQRYVTKLIALYRIRQERSFEKLDIYQYGKKMASLVEDLRKAQSLSVDMDHINTLDQALVIHDKHDIVLNGSHLIKDFGMKPGPQLGLMLEKVELAIVEGRLDNDFTTIEAFVREELAT.

ATP contacts are provided by G32 and R35. Residues G32 and R35 each contribute to the CTP site. 2 residues coordinate Mg(2+): D45 and D47. Positions 116, 159, 162, 165, and 168 each coordinate ATP. R116, D159, R162, R165, and R168 together coordinate CTP.

The protein belongs to the tRNA nucleotidyltransferase/poly(A) polymerase family. Bacterial CCA-adding enzyme type 3 subfamily. As to quaternary structure, homodimer. Mg(2+) serves as cofactor.

It carries out the reaction a tRNA precursor + 2 CTP + ATP = a tRNA with a 3' CCA end + 3 diphosphate. The catalysed reaction is a tRNA with a 3' CCA end + 2 CTP + ATP = a tRNA with a 3' CCACCA end + 3 diphosphate. Catalyzes the addition and repair of the essential 3'-terminal CCA sequence in tRNAs without using a nucleic acid template. Adds these three nucleotides in the order of C, C, and A to the tRNA nucleotide-73, using CTP and ATP as substrates and producing inorganic pyrophosphate. tRNA 3'-terminal CCA addition is required both for tRNA processing and repair. Also involved in tRNA surveillance by mediating tandem CCA addition to generate a CCACCA at the 3' terminus of unstable tRNAs. While stable tRNAs receive only 3'-terminal CCA, unstable tRNAs are marked with CCACCA and rapidly degraded. The polypeptide is CCA-adding enzyme (Streptococcus pyogenes serotype M2 (strain MGAS10270)).